A 113-amino-acid chain; its full sequence is Ig kappa chain V-II region 17S29.1 (113 aa).

The segment at 1-23 is framework-1; sequence DIVMTQAVFSNPVTLGTSASISC. An intrachain disulfide couples Cys-23 to Cys-93. Residues 24-39 form a complementarity-determining-1 region; that stretch reads RSSKSLLHSNGITYLY. A framework-2 region spans residues 40–54; the sequence is WYLQKPGQSPQLLLY. The tract at residues 55-61 is complementarity-determining-2; sequence QMSNLAS. The tract at residues 62–93 is framework-3; the sequence is GVPDRFSSSGSGTDFTLRISRVEAEDVGVYYC. The segment at 94-102 is complementarity-determining-3; the sequence is AHNLELPYT. Residues 103-112 form a framework-4 region; it reads FGGGTKLEIK.

In terms of biological role, anti-streptococcal group A carbohydrate antibody. This Mus musculus (Mouse) protein is Ig kappa chain V-II region 17S29.1.